Here is a 576-residue protein sequence, read N- to C-terminus: MNYALLSNGITTALEKEGSIEWFPVPKFDSPSVFTKILDEDKGGYFLITPEKFNKVKQQYVEYSLILRTEFDDGNLILIDFLPLSLPAIIRLYEAKVPFNVEVKPLFNYGLVNAGTETRKDGIIYKNPESKEGLELLINGDYKIISPYRITVNSGKGYLYLLYSRDLRYGLFSQKGFVYSEPYEAYSKLLYYSRKELERARKPSIYENAFYRSLSVILGLIYKPSGGIIASPTTSIPEIVGDERNWDYRYVWVRDSSYAIEALVKANLLTHARRALDFLTNLLDPSSKSFDHPFYSVDGTPPPAEENLDWLSGFMNSKPVRIGNAAYLQIQMDIEGAYMNALYEYYKRTLDKDYISSIFWAVEAISDWVSSSWRGESTDIWEERGISRHYTHTKLMSWVALDRASKLAKDLGYNKLFEEWKSRANEIKIDILNNGVKDNHHFVRYYGGDEIDAALLTLPIYDFIPATDTLFMNTLKKIDEELRVADGLYLRYKKDFMGLAKNPFTLVTTWMARVYIRLKEFDRARWLLETLIKCNQDLGLIGEHVDPETCEARGNYPHLFPHSGMVLSILEFDEVR.

It belongs to the glycosyl hydrolase 15 family.

It carries out the reaction alpha,alpha-trehalose + H2O = alpha-D-glucose + beta-D-glucose. The protein operates within glycan degradation; trehalose degradation; D-glucose from alpha,alpha-trehalose: step 1/1. Catalyzes the hydrolysis of alpha,alpha-trehalose into two molecules of D-glucose. In Sulfolobus acidocaldarius (strain ATCC 33909 / DSM 639 / JCM 8929 / NBRC 15157 / NCIMB 11770), this protein is Trehalase 2 (treH2).